Reading from the N-terminus, the 450-residue chain is NADP-specific glutamate dehydrogenase (450 aa).

The active site involves K111.

This sequence belongs to the Glu/Leu/Phe/Val dehydrogenases family. Homohexamer.

The enzyme catalyses L-glutamate + NADP(+) + H2O = 2-oxoglutarate + NH4(+) + NADPH + H(+). The sequence is that of NADP-specific glutamate dehydrogenase from Hebeloma cylindrosporum.